The chain runs to 345 residues: Protein PXR1 (345 aa).

2 disordered regions span residues 1–25 and 166–317; these read MGLAGTKVKQRFGLDPRNTNWSNNN and VEDE…ASRL. A G-patch domain is found at 25 to 71; the sequence is NNQFGHQYLTKMGWTPGKGIGLVPDSITTHLKINIKTDNAGLGAKLQ. Over residues 187-227 the composition is skewed to basic residues; that stretch reads KKEKKEKKEKKEKKEKKEKKEKKEKKEKKEKKEKKEKKEKK. Residues 228-237 are compositionally biased toward basic and acidic residues; the sequence is EKKEKSDKKE. Residues 238-278 show a composition bias toward basic residues; the sequence is KKEKKDKKEKKEKKEKKEKKEKKEKKEKKEKKEKKEKKEKK. Positions 279-288 are enriched in basic and acidic residues; the sequence is EKKDKLDKES. Over residues 289–312 the composition is skewed to polar residues; sequence SNAANVESTKSLVSDSSRESTPTP.

Belongs to the PINX1 family.

The protein resides in the nucleus. The protein localises to the nucleolus. Its function is as follows. Involved in rRNA-processing at A0, A1 and A2 sites and negatively regulates telomerase. The protein is Protein PXR1 (PXR1) of Lodderomyces elongisporus (strain ATCC 11503 / CBS 2605 / JCM 1781 / NBRC 1676 / NRRL YB-4239) (Yeast).